Here is a 179-residue protein sequence, read N- to C-terminus: Lebocin-1/2 (179 aa).

Residues 1–16 form the signal peptide; that stretch reads MYKFLVFSSVLVLFFA. A propeptide spanning residues 17–120 is cleaved from the precursor; the sequence is QASCQRFIQP…QPIESHRNTR (104 aa). Positions 93–116 are disordered; that stretch reads NNEASIEHSHHTVDTGLDQPIESH. A glycan (O-linked (GalNAc...) threonine) is linked at Thr-135. Residues 153 to 179 constitute a propeptide that is removed on maturation; it reads RRHASDDQEELRQYNEHFLIPRDIFQE.

Belongs to the lebocin family. Post-translationally, O-glycosylation is important for the antibacterial activity of lebocin, O-linked glycan structure is a disaccharide (Gal-GalNAc) in case of lebocin 1 and a monosaccharide (GalNAc) in case of lebocin 2. In terms of tissue distribution, hemolymph. Produced in fat body.

It localises to the secreted. Antibacterial peptide. The sequence is that of Lebocin-1/2 from Bombyx mori (Silk moth).